The chain runs to 226 residues: PKHD-type hydroxylase Pfl01_0799 (226 aa).

In terms of domain architecture, Fe2OG dioxygenase spans 78–178; it reads KVFPPLLNCY…RYASFFWTQS (101 aa). Residues His96, Asp98, and His159 each coordinate Fe cation. Residue Arg169 coordinates 2-oxoglutarate.

The cofactor is Fe(2+). L-ascorbate is required as a cofactor.

This is PKHD-type hydroxylase Pfl01_0799 from Pseudomonas fluorescens (strain Pf0-1).